We begin with the raw amino-acid sequence, 423 residues long: 3-phosphoshikimate 1-carboxyvinyltransferase (423 aa).

3-phosphoshikimate is bound by residues Lys21, Ser22, and Arg26. A phosphoenolpyruvate-binding site is contributed by Lys21. 2 residues coordinate phosphoenolpyruvate: Gly92 and Arg120. 3-phosphoshikimate contacts are provided by Ser164, Gln166, Asp312, and Lys339. Gln166 lines the phosphoenolpyruvate pocket. Asp312 functions as the Proton acceptor in the catalytic mechanism. The phosphoenolpyruvate site is built by Arg343 and Arg385.

It belongs to the EPSP synthase family. In terms of assembly, monomer.

Its subcellular location is the cytoplasm. It catalyses the reaction 3-phosphoshikimate + phosphoenolpyruvate = 5-O-(1-carboxyvinyl)-3-phosphoshikimate + phosphate. It participates in metabolic intermediate biosynthesis; chorismate biosynthesis; chorismate from D-erythrose 4-phosphate and phosphoenolpyruvate: step 6/7. Functionally, catalyzes the transfer of the enolpyruvyl moiety of phosphoenolpyruvate (PEP) to the 5-hydroxyl of shikimate-3-phosphate (S3P) to produce enolpyruvyl shikimate-3-phosphate and inorganic phosphate. The chain is 3-phosphoshikimate 1-carboxyvinyltransferase from Thermoanaerobacter pseudethanolicus (strain ATCC 33223 / 39E) (Clostridium thermohydrosulfuricum).